Consider the following 391-residue polypeptide: Cdc42 effector protein 1 (391 aa).

Phosphoserine occurs at positions 19 and 27. At Thr-34 the chain carries Phosphothreonine. Residues 38–52 (ISHPLGDFRHTMHVG) enclose the CRIB domain. Ser-39 bears the Phosphoserine mark. Arg-53 carries the post-translational modification Omega-N-methylarginine. 7 positions are modified to phosphoserine: Ser-65, Ser-73, Ser-77, Ser-101, Ser-113, Ser-121, and Ser-139. The tract at residues 163–189 (ISRLPRSEKPHDRDRDGSFPSEPGLRR) is disordered. A compositionally biased stretch (basic and acidic residues) spans 167 to 179 (PRSEKPHDRDRDG). Ser-180, Ser-190, Ser-192, and Ser-195 each carry phosphoserine. 8 consecutive repeat copies span residues 220–226 (PAAETPA), 227–233 (PAANPPA), 234–240 (PTANPTG), 241–247 (PAANPPA), 248–254 (TTANPPA), 255–261 (PAANPSA), 262–268 (PAATPTG), and 269–275 (PAANPPA). The interval 220 to 275 (PAAETPAPAANPPAPTANPTGPAANPPATTANPPAPAANPSAPAATPTGPAANPPA) is 8 X 7 AA tandem repeats of [PT]-[AT]-A-[ENT]-[PT]-[PTS]-[AG]. A disordered region spans residues 221–338 (AAETPAPAAN…HHYPEMDARQ (118 aa)). Over residues 236–270 (ANPTGPAANPPATTANPPAPAANPSAPAATPTGPA) the composition is skewed to low complexity. Ser-303 is modified (phosphoserine). Residues 327–338 (GGHHYPEMDARQ) are compositionally biased toward basic and acidic residues. Phosphoserine occurs at positions 350 and 353. Residues 354-391 (LDEEWRAPQAGSRTPVPSTVQANTFEFADAEEDDEVKV) form a disordered region. Residues 364 to 377 (GSRTPVPSTVQANT) show a composition bias toward polar residues. Acidic residues predominate over residues 381 to 391 (ADAEEDDEVKV).

This sequence belongs to the BORG/CEP family. As to quaternary structure, interacts with RHOQ and CDC42, in a GTP-dependent manner. As to expression, endothelial and bone marrow stromal cells.

The protein resides in the endomembrane system. It is found in the cytoplasm. It localises to the cytoskeleton. Functionally, probably involved in the organization of the actin cytoskeleton. Induced membrane extensions in fibroblasts. This Homo sapiens (Human) protein is Cdc42 effector protein 1 (CDC42EP1).